A 312-amino-acid chain; its full sequence is DNA-directed RNA polymerase subunit alpha (312 aa).

The interval 1 to 226 (MIEFEKPTIT…EHLGLFTDLT (226 aa)) is alpha N-terminal domain (alpha-NTD). An alpha C-terminal domain (alpha-CTD) region spans residues 242-312 (SDDRMLDRTI…DLGLGLKKDK (71 aa)).

The protein belongs to the RNA polymerase alpha chain family. As to quaternary structure, homodimer. The RNAP catalytic core consists of 2 alpha, 1 beta, 1 beta' and 1 omega subunit. When a sigma factor is associated with the core the holoenzyme is formed, which can initiate transcription.

The enzyme catalyses RNA(n) + a ribonucleoside 5'-triphosphate = RNA(n+1) + diphosphate. Functionally, DNA-dependent RNA polymerase catalyzes the transcription of DNA into RNA using the four ribonucleoside triphosphates as substrates. This Streptococcus suis (strain 98HAH33) protein is DNA-directed RNA polymerase subunit alpha.